The sequence spans 158 residues: Protein-export protein SecB (158 aa).

Belongs to the SecB family. In terms of assembly, homotetramer, a dimer of dimers. One homotetramer interacts with 1 SecA dimer.

Its subcellular location is the cytoplasm. In terms of biological role, one of the proteins required for the normal export of preproteins out of the cell cytoplasm. It is a molecular chaperone that binds to a subset of precursor proteins, maintaining them in a translocation-competent state. It also specifically binds to its receptor SecA. This is Protein-export protein SecB from Anaplasma phagocytophilum (strain HZ).